A 193-amino-acid polypeptide reads, in one-letter code: MEPFRIHKGTAAVLMNDNIDTDQIIPKQYLKRIERTGFGKFLFDEWRYDNNRQENPNFPLNAQERKGASILITGDNFGCGSSREHAPWALADYGFRVIIAGGFADIFYMNCMKNGMLPIVMDKDMREQLAKTDAREQITVDLENEIMTTNTHRFHFTIEKMWKEKLLNGLDEISITMQYEQEIKEYERKVALH.

The protein belongs to the LeuD family. LeuD type 1 subfamily. Heterodimer of LeuC and LeuD.

The enzyme catalyses (2R,3S)-3-isopropylmalate = (2S)-2-isopropylmalate. The protein operates within amino-acid biosynthesis; L-leucine biosynthesis; L-leucine from 3-methyl-2-oxobutanoate: step 2/4. In terms of biological role, catalyzes the isomerization between 2-isopropylmalate and 3-isopropylmalate, via the formation of 2-isopropylmaleate. The sequence is that of 3-isopropylmalate dehydratase small subunit from Bacillus cereus (strain B4264).